A 279-amino-acid polypeptide reads, in one-letter code: Pleckstrin homology domain-containing family F member 1 (279 aa).

The 97-residue stretch at 35-131 (VLLGEGVLTK…WISHIEECVR (97 aa)) folds into the PH domain. The FYVE-type zinc-finger motif lies at 152–212 (DKATDICMRC…VCSLCYRELA (61 aa)). Residues C158, C161, C175, C178, C183, C186, C204, and C207 each contribute to the Zn(2+) site. Residues 219–264 (EAKERFRGSPGQLTHLGSTMCGASSGDDDDSDEDREGSGDGDWPTQ) are disordered. Over residues 244–253 (GDDDDSDEDR) the composition is skewed to acidic residues.

Its subcellular location is the nucleus. The protein resides in the cytoplasm. It is found in the perinuclear region. It localises to the lysosome. May induce apoptosis through the lysosomal-mitochondrial pathway. Translocates to the lysosome initiating the permeabilization of lysosomal membrane (LMP) and resulting in the release of CTSD and CTSL to the cytoplasm. Triggers the caspase-independent apoptosis by altering mitochondrial membrane permeabilization (MMP) resulting in the release of PDCD8. This is Pleckstrin homology domain-containing family F member 1 (Plekhf1) from Rattus norvegicus (Rat).